The sequence spans 277 residues: MDLCGFRVGLDRPLFLIAGPCVVESEQLALDTAGALAEMTGELGIPFIYKSSFDKANRSSHESYRGPGLEAGLRVLEQVRRQIGVPVITDVHEDTPLVEVASVVDVLQTPAFLCRQTNFIQNVARQGRPVNIKKGQFLAPWDMRHVVAKAREAGNQQIMVCERGVSFGYNNLVSDMRALAVMRETGAPVVFDATHSVQLPGGQGSASGGQREFVPVLARAAVAAGVAGLFMETHPDPDQALSDGPNAWPLERMRELLETLMELDQVVKGRGFTEQGL.

This sequence belongs to the KdsA family.

Its subcellular location is the cytoplasm. The catalysed reaction is D-arabinose 5-phosphate + phosphoenolpyruvate + H2O = 3-deoxy-alpha-D-manno-2-octulosonate-8-phosphate + phosphate. It participates in carbohydrate biosynthesis; 3-deoxy-D-manno-octulosonate biosynthesis; 3-deoxy-D-manno-octulosonate from D-ribulose 5-phosphate: step 2/3. Its pathway is bacterial outer membrane biogenesis; lipopolysaccharide biosynthesis. In Alkalilimnicola ehrlichii (strain ATCC BAA-1101 / DSM 17681 / MLHE-1), this protein is 2-dehydro-3-deoxyphosphooctonate aldolase.